Consider the following 44-residue polypeptide: Putative protein PsbN (44 aa).

The chain crosses the membrane as a helical span at residues 3–23 (IISFLSTIFLGFFIISTTIYS).

This sequence belongs to the PsbN family.

Its subcellular location is the plastid. The protein localises to the chloroplast thylakoid membrane. Its function is as follows. May play a role in photosystem I and II biogenesis. This Euglena gracilis protein is Putative protein PsbN.